The sequence spans 954 residues: Glycine dehydrogenase (decarboxylating) (954 aa).

An N6-(pyridoxal phosphate)lysine modification is found at lysine 706.

This sequence belongs to the GcvP family. The glycine cleavage system is composed of four proteins: P, T, L and H. It depends on pyridoxal 5'-phosphate as a cofactor.

It catalyses the reaction N(6)-[(R)-lipoyl]-L-lysyl-[glycine-cleavage complex H protein] + glycine + H(+) = N(6)-[(R)-S(8)-aminomethyldihydrolipoyl]-L-lysyl-[glycine-cleavage complex H protein] + CO2. The glycine cleavage system catalyzes the degradation of glycine. The P protein binds the alpha-amino group of glycine through its pyridoxal phosphate cofactor; CO(2) is released and the remaining methylamine moiety is then transferred to the lipoamide cofactor of the H protein. The polypeptide is Glycine dehydrogenase (decarboxylating) (Thermosynechococcus vestitus (strain NIES-2133 / IAM M-273 / BP-1)).